We begin with the raw amino-acid sequence, 502 residues long: Glutamate--tRNA ligase (502 aa).

The 'HIGH' region signature appears at 9 to 19 (PSPTGFPHVGT). The 'KMSKS' region motif lies at 250 to 254 (KLSKR). Lysine 253 contacts ATP.

Belongs to the class-I aminoacyl-tRNA synthetase family. Glutamate--tRNA ligase type 1 subfamily. In terms of assembly, monomer.

It is found in the cytoplasm. It catalyses the reaction tRNA(Glu) + L-glutamate + ATP = L-glutamyl-tRNA(Glu) + AMP + diphosphate. Its function is as follows. Catalyzes the attachment of glutamate to tRNA(Glu) in a two-step reaction: glutamate is first activated by ATP to form Glu-AMP and then transferred to the acceptor end of tRNA(Glu). This chain is Glutamate--tRNA ligase, found in Acinetobacter baylyi (strain ATCC 33305 / BD413 / ADP1).